The chain runs to 217 residues: uncharacterized protein (217 aa).

The first 24 residues, 1–24 (MRYTVLIALQGALLLLLLIDDGQG), serve as a signal peptide directing secretion.

This is an uncharacterized protein from Aedes vexans (Inland floodwater mosquito).